Here is a 605-residue protein sequence, read N- to C-terminus: Vicilin GC72-A (605 aa).

Positions 1–23 (MVRNKSVFVVLLFSLFLSFGLLC) are cleaved as a signal peptide. 2 disordered regions span residues 52 to 81 (TRGQTEQDKCEDRSETQLKEEQQRDGEDPQ) and 157 to 181 (GERENKWREEEEEESDEGEQQQRNN). A compositionally biased stretch (acidic residues) spans 166–175 (EEEEESDEGE). Cupin type-1 domains lie at 183–341 (YYFH…EQLD) and 387–564 (FNLL…RLVD). The disordered stretch occupies residues 465–485 (SSDWSSREEEEQEEQEVERRS).

The protein belongs to the 7S seed storage protein family.

It localises to the vacuole. It is found in the aleurone grain. Seed storage protein. The polypeptide is Vicilin GC72-A (Gossypium hirsutum (Upland cotton)).